The chain runs to 205 residues: Thymidine kinase (205 aa).

Residues 9-16 (SAMNAGKS) and 87-90 (DESQ) each bind ATP. Catalysis depends on Glu-88, which acts as the Proton acceptor. Zn(2+) contacts are provided by Cys-145, Cys-147, Cys-182, and His-185.

This sequence belongs to the thymidine kinase family. Homotetramer.

Its subcellular location is the cytoplasm. The enzyme catalyses thymidine + ATP = dTMP + ADP + H(+). This Salmonella choleraesuis (strain SC-B67) protein is Thymidine kinase.